A 581-amino-acid chain; its full sequence is NADP-dependent malic enzyme 1 (581 aa).

Catalysis depends on Tyr-129, which acts as the Proton donor. An NADP(+)-binding site is contributed by Arg-182. The active-site Proton acceptor is Lys-200. 3 residues coordinate a divalent metal cation: Glu-272, Asp-273, and Asp-296. NADP(+) is bound by residues Asp-296, 325–341 (LFLG…ELIA), and Asn-437.

It belongs to the malic enzymes family. As to quaternary structure, homohexamers and homooctamers. Mg(2+) is required as a cofactor. The cofactor is Mn(2+). In terms of tissue distribution, specifically expressed in roots (only in steles of secondary roots).

It localises to the cytoplasm. The catalysed reaction is (S)-malate + NADP(+) = pyruvate + CO2 + NADPH. The enzyme catalyses oxaloacetate + H(+) = pyruvate + CO2. The protein is NADP-dependent malic enzyme 1 (NADP-ME1) of Arabidopsis thaliana (Mouse-ear cress).